Here is a 757-residue protein sequence, read N- to C-terminus: Palmitoyltransferase AKR1 (757 aa).

2 stretches are compositionally biased toward polar residues: residues 1 to 20 (MSDI…STDP) and 36 to 46 (ESISSLQPIVS). The tract at residues 1–54 (MSDINTESGESTSLPNSTDPPLSDVNIDVEDDDTAESISSLQPIVSNTTNPPEE) is disordered. Over 1 to 307 (MSDINTESGE…KLFKKSDHAK (307 aa)) the chain is Cytoplasmic. 6 ANK repeats span residues 58–88 (PVLG…DLNT), 92–121 (GDIT…DVNA), 126–155 (LEAT…DPTM), 159–188 (QGFN…AKGI), 197–226 (KGRT…STKI), and 230–259 (GGFT…DFFL). A helical membrane pass occupies residues 308 to 328 (VITFFVPLVALSIIFILFTHL). Topologically, residues 329 to 331 (HPL) are lumenal. Residues 332–352 (FALLISLIFGLAVNKALKELI) traverse the membrane as a helical segment. Residues 353 to 375 (LPSYSNYGLHSTSLLKSPFLSGT) are Cytoplasmic-facing. Residues 376-396 (FFGSLLLLTIVWIFKIAPFTI) traverse the membrane as a helical segment. Residues 397 to 402 (FKSRLL) are Lumenal-facing. Residues 403-423 (TNFFMFLILMQIYYLFIKLIF) form a helical membrane-spanning segment. The Cytoplasmic segment spans residues 424 to 498 (SDPGCVPIET…YNDIGLKNHK (75 aa)). Residues 455 to 505 (NFCLETWIRKPLRSHFSTLNTHNVARFDHFCPWIYNDIGLKNHKNFMWFIL) enclose the DHHC domain. C485 (S-palmitoyl cysteine intermediate) is an active-site residue. The chain crosses the membrane as a helical span at residues 499-519 (NFMWFILLTEVGIWFFISLTM). At 520–550 (KYFDILEDTNEDVACFLLGDDELCAGFVYDR) the chain is on the lumenal side. Residues 551–571 (FTFLIALWALIQSVWVGFLIV) form a helical membrane-spanning segment. At 572–757 (VQVFQTFTGV…YPEPTGPESV (186 aa)) the chain is on the cytoplasmic side. Positions 614–647 (ELRNDDDDTAASRTGNNPNHSNGTTIPSEGSRIN) are disordered. Positions 624–646 (ASRTGNNPNHSNGTTIPSEGSRI) are enriched in polar residues.

This sequence belongs to the DHHC palmitoyltransferase family. AKR/ZDHHC17 subfamily.

It localises to the early endosome membrane. The protein localises to the golgi apparatus membrane. It catalyses the reaction L-cysteinyl-[protein] + hexadecanoyl-CoA = S-hexadecanoyl-L-cysteinyl-[protein] + CoA. Its function is as follows. Palmitoyltransferase specific for casein kinase 1. The protein is Palmitoyltransferase AKR1 (AKR1) of Naumovozyma castellii (Yeast).